A 339-amino-acid polypeptide reads, in one-letter code: Probable cytosolic iron-sulfur protein assembly protein CIAO1 (339 aa).

7 WD repeats span residues 14–53 (HPDS…WICK), 59–98 (GHQR…FECV), 103–142 (GHEN…EYEC), 148–187 (SHTQ…WVCC), 192–231 (GHES…NEQG), 250–289 (FHTR…DPQQ), and 301–339 (AHSQ…PAGL). Positions 176–178 (LYQ) match the LYR motif; required for interaction with HSC20 motif.

Belongs to the WD repeat CIA1 family. In terms of assembly, component of the CIA complex. Interacts with CIAO2A and forms a complex with CIAO2B and MMS19; the interactions with CIAO2A and CIAO2B are mutually exclusive. Interacts with CHD1L, ERCC2, IREB2 and POLD1. Component of the MMXD complex, which includes CIAO1, ERCC2, CIAO2B, MMS19 and SLC25A5. Interacts with WT1. Interacts with CIAO3. Interacts (via LYR motif) with HSC20.

The protein localises to the cytoplasm. Functionally, key component of the cytosolic iron-sulfur protein assembly (CIA) complex, a multiprotein complex that mediates the incorporation of iron-sulfur cluster into extramitochondrial Fe/S proteins. As a CIA complex component, interacts specifically with CIAO2A or CIAO2B and MMS19 to assist different branches of iron-sulfur protein assembly, depending of its interactors. The complex CIAO1:CIAO2B:MMS19 binds to and facilitates the assembly of most cytosolic-nuclear Fe/S proteins. CIAO1:CIAO2A specifically matures ACO1 and stabilizes IREB2. Seems to specifically modulate the transactivation activity of WT1. As part of the mitotic spindle-associated MMXD complex it may play a role in chromosome segregation. This is Probable cytosolic iron-sulfur protein assembly protein CIAO1 from Mus musculus (Mouse).